Consider the following 236-residue polypeptide: Baculoviral IAP repeat-containing protein 8 (236 aa).

The BIR repeat unit spans residues 7-70; sequence RLITFGTWMY…KWYPGCKYLL (64 aa). Zn(2+) contacts are provided by Cys39, Cys42, His59, and Cys66. The RING-type zinc-finger motif lies at 189 to 224; sequence CKICMDRHIAVVFIPCGHLVTCKQCAEAVDRCPMCS.

The protein belongs to the IAP family. As to quaternary structure, binds to caspase-9. As to expression, testis specific in normal tissues.

It is found in the cytoplasm. Functionally, protects against apoptosis mediated by BAX. In Homo sapiens (Human), this protein is Baculoviral IAP repeat-containing protein 8 (BIRC8).